The following is a 255-amino-acid chain: Small ribosomal subunit protein uS2 (255 aa).

Residues 226–255 form a disordered region; the sequence is QGVSNEEVAAEQNIDLDEKEKSEETEATEE.

The protein belongs to the universal ribosomal protein uS2 family.

The protein is Small ribosomal subunit protein uS2 of Staphylococcus aureus (strain Mu3 / ATCC 700698).